We begin with the raw amino-acid sequence, 325 residues long: Zinc metalloproteinase/disintegrin (325 aa).

The propeptide occupies Lys-1 to Glu-39. Gln-40 bears the Pyrrolidone carboxylic acid mark. The Peptidase M12B domain occupies Arg-46–Pro-242. A Zn(2+)-binding site is contributed by His-182. Glu-183 is an active-site residue. Zn(2+) contacts are provided by His-186 and His-192. Intrachain disulfides connect Cys-197–Cys-221 and Cys-199–Cys-204. Positions Leu-243–Leu-257 are excised as a propeptide. One can recognise a Disintegrin domain in the interval Thr-250–Phe-322. The residue at position 258 (Gln-258) is a Pyrrolidone carboxylic acid. Intrachain disulfides connect Cys-264-Cys-287, Cys-278-Cys-284, Cys-283-Cys-308, and Cys-296-Cys-315. The Cell attachment site signature appears at Arg-300–Asp-302.

It belongs to the venom metalloproteinase (M12B) family. P-II subfamily. P-IIe sub-subfamily. Heterodimer of bitisgabonin and gabonin-1 (bitisgabonin-1) or gabonin-2 (bitisgabonin-2); disulfide-linked. It depends on Zn(2+) as a cofactor. As to expression, expressed by the venom gland.

It is found in the secreted. Impairs hemostasis in the envenomed animal. Its function is as follows. In dimer with gabonin-1 (bitisgabonin-1), is a potent inhibitor of the adhesion of the RGD-dependent integrin alpha-5/beta-1 (ITGA5/ITGB1) to immobilized fibronectin. Functionally, in dimer with gabonin-2 (bitisgabonin-2), preferentially inhibits the adhesion of the alpha-4/beta-1 (ITGA4/ITGB1) and alpha-9/beta-1 (ITGA9/ITGB1) integrins to VCAM-1 and also acts as a strong antagonist of alpha-5/beta-1 (ITGA5/ITGB1). The polypeptide is Zinc metalloproteinase/disintegrin (Bitis gabonica (Gaboon adder)).